The following is a 364-amino-acid chain: E3 ubiquitin-protein ligase rnf146 (364 aa).

Residues 18–37 are disordered; the sequence is KKVSGEAVPEGSGSPSSPSL. Residues 22–34 are compositionally biased toward low complexity; it reads GEAVPEGSGSPSS. Residues 42–80 form an RING-type zinc finger; that stretch reads CPICLQSCVHPVRLPCRHIFCFLCVKGASWHSKRCALCR. A WWE domain is found at 102–178; that stretch reads SATGGCGTGS…EHGRRRRMKR (77 aa). A glycoprotein-binding residues include Y118, R121, W125, Y155, Q164, R174, and K186. Disordered regions lie at residues 217–262 and 279–364; these read AAAE…PASS and NEQE…VTKV. 2 stretches are compositionally biased toward acidic residues: residues 281–295 and 308–322; these read QEPE…DDSA and TSDD…DENE.

The protein resides in the cytoplasm. It localises to the cytosol. It is found in the nucleus. It carries out the reaction S-ubiquitinyl-[E2 ubiquitin-conjugating enzyme]-L-cysteine + [acceptor protein]-L-lysine = [E2 ubiquitin-conjugating enzyme]-L-cysteine + N(6)-ubiquitinyl-[acceptor protein]-L-lysine.. It functions in the pathway protein modification; protein ubiquitination. E3 ubiquitin-protein ligase that specifically binds poly-ADP-ribosylated proteins and mediates their ubiquitination and subsequent degradation. May regulate many important biological processes, such as cell survival and DNA damage response. Acts as an activator of the Wnt signaling pathway by mediating the ubiquitination of poly-ADP-ribosylated proteins. Neuroprotective protein. Protects against cell death induced by DNA damaging agents and rescues cells from G1 arrest. Promotes cell survival after gamma-irradiation. Facilitates DNA repair. This Danio rerio (Zebrafish) protein is E3 ubiquitin-protein ligase rnf146 (rnf146).